A 193-amino-acid chain; its full sequence is Sorting nexin-22 (193 aa).

The disordered stretch occupies residues 1–21 (MLEVHIPSVGPEAEGPRQSPE). Residues 1–118 (MLEVHIPSVG…HFPTDPKASN (118 aa)) form the PX domain. A 1,2-diacyl-sn-glycero-3-phospho-(1D-myo-inositol-3-phosphate) contacts are provided by Arg-43, Ser-45, Lys-66, and Arg-79.

The protein belongs to the sorting nexin family. (Microbial infection) Interacts with P.falciparum (strain 3D7) CK1. Expressed in erythrocytes (at protein level).

The protein resides in the cytoplasmic vesicle membrane. Its function is as follows. May be involved in several stages of intracellular trafficking. Interacts with membranes containing phosphatidylinositol 3-phosphate (PtdIns(3P)). This Homo sapiens (Human) protein is Sorting nexin-22 (SNX22).